The following is a 761-amino-acid chain: Dipeptidyl-peptidase 4 (761 aa).

Residues 1 to 15 (MTLSAWIILVTLAMA) form the signal peptide. Catalysis depends on charge relay system residues S622, D706, and H738.

The protein belongs to the peptidase S9C family.

The protein localises to the membrane. In terms of biological role, may be involved in metabolism of dipeptides or may affect host defense mechanisms. The chain is Dipeptidyl-peptidase 4 (DPP) from Giardia intestinalis (Giardia lamblia).